Reading from the N-terminus, the 295-residue chain is Probable adenylate kinase 6, chloroplastic (295 aa).

The N-terminal 46 residues, 1-46 (MAVSHRLLRPATTTIKNTFSSLFIRSLSSSSSGSSLDPKIDLEEAA), are a transit peptide targeting the chloroplast. 74 to 79 (GVGKGT) contacts ATP. The tract at residues 94 to 123 (ATGDLVREELSSSGLLSSQLKELVNHGKLV) is NMP. AMP contacts are provided by residues T95, R100, 121–123 (KLV), 151–154 (GFPR), and Q158. An LID region spans residues 187–235 (GRRICSECGGNYNVACIDIKGDDDTPRMYMPPLLPPPNCESKLISRADD). R188 is an ATP binding site. R243 contributes to the AMP binding site. ATP is bound at residue G271.

This sequence belongs to the adenylate kinase family. Monomer.

It is found in the plastid. The protein resides in the chloroplast. It carries out the reaction AMP + ATP = 2 ADP. Catalyzes the reversible transfer of the terminal phosphate group between ATP and AMP. Plays an important role in cellular energy homeostasis and in adenine nucleotide metabolism. The chain is Probable adenylate kinase 6, chloroplastic from Arabidopsis thaliana (Mouse-ear cress).